Here is a 476-residue protein sequence, read N- to C-terminus: Protein DETOXIFICATION 3 (476 aa).

12 helical membrane passes run 35-55 (AAPMAAVTIAQYLLPVISVMV), 66-86 (GVALATSFTNVSGFSILFGLA), 117-137 (IPICVLISVLWIYIEKLLISL), 146-166 (VAGSYALWLIPALFAHAFFIP), 185-205 (LTTLLFHIPVCWAFVYAFGLG), 208-228 (GAAMAISVSFWFYVVILSCYV), 260-280 (AAMVCLEWWLFELLILCSGLL), 289-309 (VLSICLTTASLHYVIPGGVAA), 331-351 (VLAGLCLWLVESAFFSTLLFT), 370-390 (VANLTPLLCLSFILDGFTAVL), 402-422 (IGALNNVVAYYLVGAPVGVYL), and 433-453 (LWCGVVVGSAVQAIILAFVTA).

Belongs to the multi antimicrobial extrusion (MATE) (TC 2.A.66.1) family.

Its subcellular location is the membrane. The chain is Protein DETOXIFICATION 3 from Arabidopsis thaliana (Mouse-ear cress).